The chain runs to 331 residues: MRRGLLLLNLGTPNNADIRAVKLYLREFLTDKRVIDLPTIPRYILVYCLILPFRSPKSAQAYQSIWTEKGSPLLYHSQNLVTKLQSALKDEYKIALGMRYGTPSITTALAELKDCHSLTILPLFPQYSSAATGSAIEKTLSHLANQEIIPSIKIIRDFYQRPEYIQAQAKIMKPYIKDNFHLLFSYHGIPERHIHKSGCDTLCPQTCTPIYDKNQACYRAQCYQTSLLLAKELQLGTHQYTTAFQSRLGKTPWIKPYTDEIFAELISKGIKNIVVSCPSFVADCLETLEEIGIRAKEQWEKLGGEQFILTPCMNDHPEWIKAIQSIVNEQF.

Histidine 187 and glutamate 286 together coordinate Fe cation.

It belongs to the ferrochelatase family.

It is found in the cytoplasm. It catalyses the reaction heme b + 2 H(+) = protoporphyrin IX + Fe(2+). It functions in the pathway porphyrin-containing compound metabolism; protoheme biosynthesis; protoheme from protoporphyrin-IX: step 1/1. Catalyzes the ferrous insertion into protoporphyrin IX. This Legionella pneumophila subsp. pneumophila (strain Philadelphia 1 / ATCC 33152 / DSM 7513) protein is Ferrochelatase.